The sequence spans 160 residues: Phosphopantetheine adenylyltransferase (160 aa).

T11 provides a ligand contact to substrate. ATP-binding positions include 11-12 (TF) and H19. Residues K43, T75, and R89 each contribute to the substrate site. ATP contacts are provided by residues 90 to 92 (GLR), E100, and 125 to 131 (YSFLSSS).

Belongs to the bacterial CoaD family. As to quaternary structure, homohexamer. It depends on Mg(2+) as a cofactor.

It localises to the cytoplasm. It catalyses the reaction (R)-4'-phosphopantetheine + ATP + H(+) = 3'-dephospho-CoA + diphosphate. Its pathway is cofactor biosynthesis; coenzyme A biosynthesis; CoA from (R)-pantothenate: step 4/5. Its function is as follows. Reversibly transfers an adenylyl group from ATP to 4'-phosphopantetheine, yielding dephospho-CoA (dPCoA) and pyrophosphate. The protein is Phosphopantetheine adenylyltransferase of Listeria monocytogenes serovar 1/2a (strain ATCC BAA-679 / EGD-e).